The primary structure comprises 122 residues: Large ribosomal subunit protein uL14 (122 aa).

This sequence belongs to the universal ribosomal protein uL14 family. As to quaternary structure, part of the 50S ribosomal subunit. Forms a cluster with proteins L3 and L19. In the 70S ribosome, L14 and L19 interact and together make contacts with the 16S rRNA in bridges B5 and B8.

Binds to 23S rRNA. Forms part of two intersubunit bridges in the 70S ribosome. This is Large ribosomal subunit protein uL14 from Shewanella denitrificans (strain OS217 / ATCC BAA-1090 / DSM 15013).